A 613-amino-acid chain; its full sequence is 4-hydroxy-3-methylbut-2-en-1-yl diphosphate synthase (flavodoxin) (613 aa).

[4Fe-4S] cluster contacts are provided by C514, C517, C548, and E555.

It belongs to the IspG family. Requires [4Fe-4S] cluster as cofactor.

It catalyses the reaction (2E)-4-hydroxy-3-methylbut-2-enyl diphosphate + oxidized [flavodoxin] + H2O + 2 H(+) = 2-C-methyl-D-erythritol 2,4-cyclic diphosphate + reduced [flavodoxin]. The protein operates within isoprenoid biosynthesis; isopentenyl diphosphate biosynthesis via DXP pathway; isopentenyl diphosphate from 1-deoxy-D-xylulose 5-phosphate: step 5/6. In terms of biological role, converts 2C-methyl-D-erythritol 2,4-cyclodiphosphate (ME-2,4cPP) into 1-hydroxy-2-methyl-2-(E)-butenyl 4-diphosphate. The sequence is that of 4-hydroxy-3-methylbut-2-en-1-yl diphosphate synthase (flavodoxin) from Chlamydia pneumoniae (Chlamydophila pneumoniae).